We begin with the raw amino-acid sequence, 633 residues long: Chaperone protein HtpG (633 aa).

Residues 1–341 are a; substrate-binding; it reads MTAPHETMSF…SADLPLNVSR (341 aa). Residues 342–562 are b; that stretch reads ELLQESRDVK…DGDMSGYLQR (221 aa). The interval 563–633 is c; sequence LLKQAGQKAP…YVQRVNRLLA (71 aa).

Belongs to the heat shock protein 90 family. As to quaternary structure, homodimer.

The protein localises to the cytoplasm. In terms of biological role, molecular chaperone. Has ATPase activity. The chain is Chaperone protein HtpG from Cupriavidus metallidurans (strain ATCC 43123 / DSM 2839 / NBRC 102507 / CH34) (Ralstonia metallidurans).